Reading from the N-terminus, the 73-residue chain is Defensin-like protein 87 (73 aa).

The N-terminal stretch at 1–27 (MTTKKTSSVVLPLLLVFALILMPMVAG) is a signal peptide. Disulfide bonds link C33–C71, C45–C69, and C49–C70.

Belongs to the DEFL family.

Its subcellular location is the secreted. The polypeptide is Defensin-like protein 87 (Arabidopsis thaliana (Mouse-ear cress)).